The following is a 568-amino-acid chain: MDQDAFFFERDPEAEGEAPRKQESLSDVIGLLDVVLSYKPTEIGEDRSWLHGIIDNPKENKPSCKADDNNKDRAISTPTQDHRSGEESGISRRTSESKTETHARILDQQGIHRASRRGTSPNPLPENMGNERNTRIDEDSPNERRHQRSVLTDEDRKMAEDSNKREEDQVEGFPEEIRRSTPLSDDGESRTNNNGRSMETSSTHSTRITDVIINPSPELEDAVLQRNKRRPTIIRRNQTRSERTQNSELHKSTSENSSNLEDHNTKTSPKGPPPKNEESAATPKNNHNHRKTKYTMNNANNNTKSPPTPEHDTTANEEETSNTSVDEMAKLLVSLGVMKSQHEFELSRSASHVFAKRMLKSANYKEMTFNLCGMLISVEKSLENKVEENRTLLKQIQEEINSSRDLHKRFSEYQKEQNSLMMANLSTLHIITDRGGKTGDPSDTTRSPSVFTKGKDNKVKKTRFDPSMEALGGQEFKPDLIREDELRDDIKNPVLEENNNDLQASNASRLIPSTEKHTLHSLKLVIENSPLSRVEKKAYIKSLYKCRTNQEVKNVMELFEEDIDSLTN.

The tract at residues 1-24 (MDQDAFFFERDPEAEGEAPRKQES) is disordered. Over residues 7 to 24 (FFERDPEAEGEAPRKQES) the composition is skewed to basic and acidic residues. The segment at 33–41 (DVVLSYKPT) is N0 binding. Residues 45–324 (EDRSWLHGII…ANEEETSNTS (280 aa)) are disordered. Composition is skewed to basic and acidic residues over residues 56–105 (NPKE…HARI), 132–144 (RNTR…PNER), and 151–167 (LTDE…KREE). Over residues 190–208 (RTNNNGRSMETSSTHSTRI) the composition is skewed to polar residues. Residues 239-253 (TRSERTQNSELHKST) are compositionally biased toward basic and acidic residues. Polar residues predominate over residues 294 to 305 (YTMNNANNNTKS). The multimerization stretch occupies residues 344-411 (FELSRSASHV…SSRDLHKRFS (68 aa)). Residues 387–416 (EENRTLLKQIQEEINSSRDLHKRFSEYQKE) are a coiled coil. The interval 412-445 (EYQKEQNSLMMANLSTLHIITDRGGKTGDPSDTT) is l protein binding. A disordered region spans residues 434–455 (RGGKTGDPSDTTRSPSVFTKGK). The span at 441 to 450 (PSDTTRSPSV) shows a compositional bias: polar residues. The segment at 479-568 (DLIREDELRD…FEEDIDSLTN (90 aa)) is interaction with the nucleocapsid (N-RNA).

The protein belongs to the respirovirus P protein family. Homotetramer. Interacts (via multimerization domain) with polymerase L; this interaction forms the polymerase complex. Interacts (via N-terminus) with N0; this interaction allows P to chaperon N0 before encapsidation and form the N-P complex. Interacts (via C-terminus) with N-RNA template; this interaction positions the polymerase on the template.

Its function is as follows. Essential cofactor of the RNA polymerase L that plays a central role in the transcription and replication by forming the polymerase complex with RNA polymerase L and recruiting L to the genomic N-RNA template for RNA synthesis. Also plays a central role in the encapsidation of nascent RNA chains by forming the encapsidation complex with the nucleocapsid protein N (N-P complex). Acts as a chaperone for newly synthesized free N protein, so-called N0, allowing encapsidation of nascent RNA chains during replication. The nucleoprotein protein N prevents excessive phosphorylation of P, which leads to down-regulation of viral transcription/ replication. Participates, together with N, in the formation of viral factories (viroplasms), which are large inclusions in the host cytoplasm where replication takes place. Recruits host PI4KB and remodel the host endoplasmic reticulum membrane to form viral replication factories. The protein is Phosphoprotein (P/C) of Human parainfluenza 1 virus (strain C35) (HPIV-1).